Reading from the N-terminus, the 72-residue chain is MAMNTVFLHLSEEAIKRLNKLRGWRKVSRSAILREAVEQYLERQQFPVRKAKGGRQRDEAVGVEELCKQHKE.

Residues 52–72 (KGGRQRDEAVGVEELCKQHKE) form a disordered region. The segment covering 55-72 (RQRDEAVGVEELCKQHKE) has biased composition (basic and acidic residues).

It belongs to the YiiE family.

This is an uncharacterized protein from Escherichia coli O6:H1 (strain CFT073 / ATCC 700928 / UPEC).